The chain runs to 503 residues: Maturase K (503 aa).

This sequence belongs to the intron maturase 2 family. MatK subfamily.

It is found in the plastid. It localises to the chloroplast. Functionally, usually encoded in the trnK tRNA gene intron. Probably assists in splicing its own and other chloroplast group II introns. The polypeptide is Maturase K (Rosa carolina (Pasture rose)).